The following is a 318-amino-acid chain: Ribosomal RNA small subunit methyltransferase H (318 aa).

S-adenosyl-L-methionine is bound by residues 35–37 (AGH), Asp-55, Phe-84, Asp-105, and Gln-112. The tract at residues 294-318 (SDSELSENNRSRSAKLRIAEKIKSR) is disordered.

Belongs to the methyltransferase superfamily. RsmH family.

It is found in the cytoplasm. It carries out the reaction cytidine(1402) in 16S rRNA + S-adenosyl-L-methionine = N(4)-methylcytidine(1402) in 16S rRNA + S-adenosyl-L-homocysteine + H(+). In terms of biological role, specifically methylates the N4 position of cytidine in position 1402 (C1402) of 16S rRNA. This Enterococcus faecalis (strain ATCC 700802 / V583) protein is Ribosomal RNA small subunit methyltransferase H.